The primary structure comprises 157 residues: Small ribosomal subunit protein uS7 (157 aa).

The protein belongs to the universal ribosomal protein uS7 family. Part of the 30S ribosomal subunit. Contacts proteins S9 and S11.

Its function is as follows. One of the primary rRNA binding proteins, it binds directly to 16S rRNA where it nucleates assembly of the head domain of the 30S subunit. Is located at the subunit interface close to the decoding center, probably blocks exit of the E-site tRNA. This Bdellovibrio bacteriovorus (strain ATCC 15356 / DSM 50701 / NCIMB 9529 / HD100) protein is Small ribosomal subunit protein uS7.